Here is a 233-residue protein sequence, read N- to C-terminus: UPF0758 protein Rcas_0037 (233 aa).

An MPN domain is found at 107-229; it reads QIRSPTDAAQ…FVSMRERGLA (123 aa). Histidine 178, histidine 180, and aspartate 191 together coordinate Zn(2+). The JAMM motif motif lies at 178–191; that stretch reads HNHPSGDPTPSPED.

The protein belongs to the UPF0758 family.

This Roseiflexus castenholzii (strain DSM 13941 / HLO8) protein is UPF0758 protein Rcas_0037.